Reading from the N-terminus, the 307-residue chain is Ribosomal RNA small subunit methyltransferase H (307 aa).

Residues A33–H35, D52, L83, D97, and Q104 each bind S-adenosyl-L-methionine.

The protein belongs to the methyltransferase superfamily. RsmH family.

Its subcellular location is the cytoplasm. The catalysed reaction is cytidine(1402) in 16S rRNA + S-adenosyl-L-methionine = N(4)-methylcytidine(1402) in 16S rRNA + S-adenosyl-L-homocysteine + H(+). Its function is as follows. Specifically methylates the N4 position of cytidine in position 1402 (C1402) of 16S rRNA. This is Ribosomal RNA small subunit methyltransferase H from Sulfurovum sp. (strain NBC37-1).